Reading from the N-terminus, the 324-residue chain is Beta-ketoacyl-[acyl-carrier-protein] synthase III (324 aa).

Catalysis depends on residues cysteine 112 and histidine 251. The ACP-binding stretch occupies residues 252–256; that stretch reads QANLR. The active site involves asparagine 281.

This sequence belongs to the thiolase-like superfamily. FabH family. As to quaternary structure, homodimer.

The protein resides in the cytoplasm. The catalysed reaction is malonyl-[ACP] + acetyl-CoA + H(+) = 3-oxobutanoyl-[ACP] + CO2 + CoA. It participates in lipid metabolism; fatty acid biosynthesis. In terms of biological role, catalyzes the condensation reaction of fatty acid synthesis by the addition to an acyl acceptor of two carbons from malonyl-ACP. Catalyzes the first condensation reaction which initiates fatty acid synthesis and may therefore play a role in governing the total rate of fatty acid production. Possesses both acetoacetyl-ACP synthase and acetyl transacylase activities. Its substrate specificity determines the biosynthesis of branched-chain and/or straight-chain of fatty acids. In Clostridium perfringens (strain ATCC 13124 / DSM 756 / JCM 1290 / NCIMB 6125 / NCTC 8237 / Type A), this protein is Beta-ketoacyl-[acyl-carrier-protein] synthase III.